The primary structure comprises 1093 residues: MAGAAGLTAEVSWKVLERRARTKRSGSVYEPLKSINLPRPDNETLWDKLDHYYRIVKSTLLLYQSPTTGLFPTKTCGGDQKAKIQDSLYCAAGAWALALAYRRIDDDKGRTHELEHSAIKCMRGILYCYMRQADKVQQFKQDPRPTTCLHSVFNVHTGDELLSYEEYGHLQINAVSLYLLYLVEMISSGLQIIYNTDEVSFIQNLVFCVERVYRVPDFGVWERGSKYNNGSTELHSSSVGLAKAALEAINGFNLFGNQGCSWSVIFVDLDAHNRNRQTLCSLLPRESRSHNTDAALLPCISYPAFALDDEVLFSQTLDKVVRKLKGKYGFKRFLRDGYRTSLEDPNRCYYKPAEIKLFDGIECEFPIFFLYMMIDGVFRGNPKQVQEYQDLLTPVLHHTTEGYPVVPKYYYVPADFVEYEKNNPGSQKRFPSNCGRDGKLFLWGQALYIIAKLLADELISPKDIDPVQRYVPLKDQRNVSMRFSNQGPLENDLVVHVALIAESQRLQVFLNTYGIQTQTPQQVEPIQIWPQQELVKAYLQLGINEKLGLSGRPDRPIGCLGTSKIYRILGKTVVCYPIIFDLSDFYMSQDVFLLIDDIKNALQFIKQYWKMHGRPLFLVLIREDNIRGSRFNPILDMLAALKKGIIGGVKVHVDRLQTLISGAVVEQLDFLRISDTEELPEFKSFEELEPPKHSKVKRQSSTPSAPELGQQPDVNISEWKDKPTHEILQKLNDCSCLASQAILLGILLKREGPNFITKEGTVSDHIERVYRRAGSQKLWLAVRYGAAFTQKFSSSIAPHITTFLVHGKQVTLGAFGHEEEVISNPLSPRVIQNIIYYKCNTHDEREAVIQQELVIHIGWIISNNPELFSGMLKIRIGWIIHAMEYELQIRGGDKPALDLYQLSPSEVKQLLLDILQPQQNGRCWLNRRQIDGSLNRTPTGFYDRVWQILERTPNGIIVAGKHLPQQPTLSDMTMYEMNFSLLVEDTLGNIDQPQYRQIVVELLMVVSIVLERNPELEFQDKVDLDRLVKEAFNEFQKDQSRLKEIEKQDDMTSFYNTPPLGKRGTCSYLTKAVMNLLLEGEVKPNNDDPCLIS.

Ala2 carries the post-translational modification N-acetylalanine. Ala4 bears the Phosphoserine mark. Positions 7-29 (LTAEVSWKVLERRARTKRSGSVY) are calmodulin-binding. Ser12 is subject to Phosphoserine; by autocatalysis. Phosphoserine occurs at positions 27 and 701. The interval 689 to 716 (EPPKHSKVKRQSSTPSAPELGQQPDVNI) is disordered. 2 calmodulin-binding regions span residues 768–795 (RVYR…FSSS) and 920–951 (NGRC…ILER). A lipid anchor (S-farnesyl cysteine) is attached at Cys1090.

Belongs to the phosphorylase b kinase regulatory chain family. As to quaternary structure, hexadecamer of 4 heterotetramers, each composed of alpha, beta, gamma, and delta subunits. Alpha (PHKA1 or PHKA2) and beta (PHKB) are regulatory subunits, gamma (PHKG1 or PHKG2) is the catalytic subunit, and delta is calmodulin. Ser-701 is probably phosphorylated by PKA. In terms of processing, although the final Cys may be farnesylated, the terminal tripeptide is probably not removed, and the C-terminus is not methylated.

It is found in the cell membrane. It participates in glycan biosynthesis; glycogen metabolism. By phosphorylation of various serine residues. Its function is as follows. Phosphorylase b kinase catalyzes the phosphorylation of serine in certain substrates, including troponin I. The beta chain acts as a regulatory unit and modulates the activity of the holoenzyme in response to phosphorylation. This Homo sapiens (Human) protein is Phosphorylase b kinase regulatory subunit beta (PHKB).